A 423-amino-acid chain; its full sequence is GTPase Obg (423 aa).

An Obg domain is found at 1-158; that stretch reads MFYDEAKIYV…RWLVLELKLL (158 aa). The 170-residue stretch at 159 to 328 folds into the OBG-type G domain; it reads ADVGLIGLPN…LLYHVSGLLA (170 aa). Residues 165–172, 190–194, 212–215, 281–284, and 309–311 each bind GTP; these read GLPNAGKS, FTTLT, DIPG, NKMD, and SAA. Mg(2+)-binding residues include Ser-172 and Thr-192. Residues 336-421 form the OCT domain; the sequence is VTAPEEEKVT…IGKFEFEYVE (86 aa).

The protein belongs to the TRAFAC class OBG-HflX-like GTPase superfamily. OBG GTPase family. Monomer. It depends on Mg(2+) as a cofactor.

The protein resides in the cytoplasm. An essential GTPase which binds GTP, GDP and possibly (p)ppGpp with moderate affinity, with high nucleotide exchange rates and a fairly low GTP hydrolysis rate. Plays a role in control of the cell cycle, stress response, ribosome biogenesis and in those bacteria that undergo differentiation, in morphogenesis control. The chain is GTPase Obg from Moorella thermoacetica (strain ATCC 39073 / JCM 9320).